Reading from the N-terminus, the 394-residue chain is Chalcone synthase 8 (394 aa).

Cysteine 165 is a catalytic residue.

Belongs to the thiolase-like superfamily. Chalcone/stilbene synthases family.

The enzyme catalyses (E)-4-coumaroyl-CoA + 3 malonyl-CoA + 3 H(+) = 2',4,4',6'-tetrahydroxychalcone + 3 CO2 + 4 CoA. It functions in the pathway secondary metabolite biosynthesis; flavonoid biosynthesis. Its function is as follows. The primary product of this enzyme is 4,2',4',6'-tetrahydroxychalcone (also termed naringenin-chalcone or chalcone) which can under specific conditions spontaneously isomerize into naringenin. The polypeptide is Chalcone synthase 8 (CHS8) (Bromheadia finlaysoniana (Orchid)).